The chain runs to 229 residues: Pdp3-interacting factor 1 (229 aa).

Aspartate 12 acts as the Nucleophile in catalysis. Mg(2+)-binding residues include aspartate 12, aspartate 14, and aspartate 176. Aspartate 14 acts as the Proton donor in catalysis.

Belongs to the HAD-like hydrolase superfamily. Component of the mst2 complex composed of at least eaf6, mst2, nto1, pdp3, ptf1, ptf2 and tfg3. Mg(2+) is required as a cofactor.

It localises to the cytoplasm. It is found in the nucleus. The enzyme catalyses D-ribitol 5-phosphate + H2O = ribitol + phosphate. The catalysed reaction is D-sorbitol 6-phosphate + H2O = D-sorbitol + phosphate. It catalyses the reaction sn-glycerol 1-phosphate + H2O = glycerol + phosphate. It carries out the reaction D-erythrose 4-phosphate + H2O = D-erythrose + phosphate. Functionally, component of the mst2 complex which is a highly specific H3 lysine 14 (H3K14) acetyltransferase that functions together with gcn5 to regulate global levels of H3K14 acetylation (H3K14ac), critical for DNA damage checkpoint activation. May also function as a sugar alcohol (polyol) phosphatase that prevents accumulation of toxic levels of polyol phosphates, which can impair glycolysis by inhibiting glucose-6-phosphate isomerase. This Schizosaccharomyces pombe (strain 972 / ATCC 24843) (Fission yeast) protein is Pdp3-interacting factor 1.